Reading from the N-terminus, the 551-residue chain is Calcium-dependent protein kinase 3 (551 aa).

Residues 1 to 57 (MGNCCRSPAAAAREDVKSSHFPASAGKKKPHQARNGGVGGGGGGGGGGGGGGGAGQK) form a disordered region. Gly2 is lipidated: N-myristoyl glycine. Residues 36 to 55 (GGVGGGGGGGGGGGGGGGAG) show a composition bias toward gly residues. A Protein kinase domain is found at 77–335 (YALDRELGRG…AKQVLEHPWL (259 aa)). Residues 83 to 91 (LGRGEFGVT) and Lys106 contribute to the ATP site. Catalysis depends on Asp201, which acts as the Proton acceptor. An autoinhibitory domain region spans residues 341 to 371 (APNVPLGDIVKSRLKQFSRMNRFKRRALRVI). 4 EF-hand domains span residues 378–413 (EEVEDIKEMFKAMDTDNDGIVSYEELKSGIAKFGSH), 414–449 (LAESEVQMLIEAVDTNGKDALDYGEFLAVSLHLQRM), 450–485 (ANDEHLRRAFLFFDKDGNGYIEPEELREALVDDGAG), and 486–521 (DSMEVVNDILQEVDTDKDGKISYDEFVAMMKTGTDW). Ca(2+)-binding residues include Asp391, Asp393, Asp395, Glu402, Asp427, Asn429, Glu438, Asp463, Asp465, Asn467, Tyr469, Glu474, Asp499, Asp501, Asp503, Lys505, and Glu510.

The protein belongs to the protein kinase superfamily. Ser/Thr protein kinase family. CDPK subfamily. In terms of tissue distribution, expressed in roots and developing seeds.

Its subcellular location is the membrane. The enzyme catalyses L-seryl-[protein] + ATP = O-phospho-L-seryl-[protein] + ADP + H(+). It carries out the reaction L-threonyl-[protein] + ATP = O-phospho-L-threonyl-[protein] + ADP + H(+). Activated by calcium. Autophosphorylation may play an important role in the regulation of the kinase activity. Functionally, may play a role in signal transduction pathways that involve calcium as a second messenger. The sequence is that of Calcium-dependent protein kinase 3 from Oryza sativa subsp. japonica (Rice).